A 440-amino-acid chain; its full sequence is Transposon Ty1-BR Gag polyprotein (440 aa).

Polar residues-rich tracts occupy residues 1-10 (MESQQLSNYP), 48-60 (TKAN…TPAS), and 127-152 (QSQF…GNTF). Disordered regions lie at residues 1-93 (MESQ…MMTQ), 126-173 (PQSQ…RPPP), and 352-440 (GSRN…PETY). Low complexity predominate over residues 153–165 (TDSSSADSDMTST). The tract at residues 299–401 (NNGIHINNKV…NSKSKTARAH (103 aa)) is RNA-binding. Residues 402–418 (NVSTSNNSPSTDNDSIS) show a composition bias toward low complexity. Serine 416 carries the phosphoserine modification. A compositionally biased stretch (polar residues) spans 419–428 (KSTTEPIQLN). The span at 429-440 (NKHDLHLRPETY) shows a compositional bias: basic and acidic residues.

In terms of assembly, homotrimer.

It localises to the cytoplasm. Functionally, capsid protein (CA) is the structural component of the virus-like particle (VLP), forming the shell that encapsulates the retrotransposons dimeric RNA genome. The particles are assembled from trimer-clustered units and there are holes in the capsid shells that allow for the diffusion of macromolecules. CA also has nucleocapsid-like chaperone activity, promoting primer tRNA(i)-Met annealing to the multipartite primer-binding site (PBS), dimerization of Ty1 RNA and initiation of reverse transcription. The protein is Transposon Ty1-BR Gag polyprotein (TY1A-BR) of Saccharomyces cerevisiae (strain ATCC 204508 / S288c) (Baker's yeast).